The following is a 282-amino-acid chain: NADPH-dependent 7-cyano-7-deazaguanine reductase (282 aa).

88-90 contacts substrate; the sequence is IES. 90–91 is a binding site for NADPH; it reads SK. Catalysis depends on Cys-190, which acts as the Thioimide intermediate. Residue Asp-197 is the Proton donor of the active site. 229–230 contacts substrate; it reads HE. NADPH is bound at residue 258 to 259; sequence RG.

It belongs to the GTP cyclohydrolase I family. QueF type 2 subfamily. Homodimer.

The protein localises to the cytoplasm. It catalyses the reaction 7-aminomethyl-7-carbaguanine + 2 NADP(+) = 7-cyano-7-deazaguanine + 2 NADPH + 3 H(+). It functions in the pathway tRNA modification; tRNA-queuosine biosynthesis. Functionally, catalyzes the NADPH-dependent reduction of 7-cyano-7-deazaguanine (preQ0) to 7-aminomethyl-7-deazaguanine (preQ1). The sequence is that of NADPH-dependent 7-cyano-7-deazaguanine reductase from Escherichia coli O127:H6 (strain E2348/69 / EPEC).